A 156-amino-acid polypeptide reads, in one-letter code: CRIB domain-containing protein RIC10 (156 aa).

One can recognise a CRIB domain in the interval 30–43 (IGFPTDVKHVAHIG). Residues 68–77 (RPSSFSNARP) show a composition bias toward polar residues. The interval 68–156 (RPSSFSNARP…SYKSTVSRLI (89 aa)) is disordered. Over residues 78–96 (STSFFTSSSSTDFDQGSSQ) the composition is skewed to low complexity. A compositionally biased stretch (basic residues) spans 117–128 (NNKKKSSRRKKS). Positions 129–156 (SSSSSSPKSSRSSVLSKSSYKSTVSRLI) are enriched in low complexity.

As to expression, expressed in roots, leaves, flowers and pollen.

It is found in the cytoplasm. In terms of biological role, functions as a downstream effector of Rho-related GTP binding proteins of the 'Rho of Plants' (ROPs) family. Participates in the propagation of ROP GTPase signals in specific cellular responses. Is involved in pollen tube growth regulation. This Arabidopsis thaliana (Mouse-ear cress) protein is CRIB domain-containing protein RIC10 (RIC10).